A 408-amino-acid polypeptide reads, in one-letter code: uncharacterized protein (408 aa).

4Fe-4S ferredoxin-type domains lie at 42–72 (IPPI…MIYN), 78–107 (KLPV…MDKH), 122–151 (SNLI…RKEG), 151–181 (GKYV…VVDE), 212–241 (KIPH…NEKK), 233–265 (GEID…IYKP), 273–302 (ICYV…ISKE), and 304–333 (KLPY…VVKP). Residues Cys-52, Cys-55, Cys-58, Cys-62, Cys-87, Cys-90, Cys-93, Cys-97, Cys-131, Cys-134, Cys-137, Cys-141, Cys-160, Cys-163, Cys-166, and Cys-170 each coordinate [4Fe-4S] cluster. [4Fe-4S] cluster contacts are provided by Cys-282, Cys-285, Cys-288, and Cys-292.

This is an uncharacterized protein from Methanocaldococcus jannaschii (strain ATCC 43067 / DSM 2661 / JAL-1 / JCM 10045 / NBRC 100440) (Methanococcus jannaschii).